We begin with the raw amino-acid sequence, 342 residues long: Renalase (342 aa).

The signal sequence occupies residues M1 to A17. Residues T12, R42, and Q61 to Y62 contribute to the FAD site.

Belongs to the renalase family. The cofactor is FAD. Secreted into the blood by the kidney. Highly expressed in the kidney, expressed at lower level in heart, skeletal muscle and small intestine. Its plasma concentration is markedly reduced in patients with end-stage renal disease, as compared with healthy subjects.

Its subcellular location is the secreted. The enzyme catalyses 1,2-dihydro-beta-NAD + O2 + H(+) = H2O2 + NAD(+). The catalysed reaction is 1,2-dihydro-beta-NADP + O2 + H(+) = H2O2 + NADP(+). It catalyses the reaction 1,6-dihydro-beta-NADP + O2 + H(+) = H2O2 + NADP(+). It carries out the reaction 1,6-dihydro-beta-NAD + O2 + H(+) = H2O2 + NAD(+). Its function is as follows. Catalyzes the oxidation of the less abundant 1,2-dihydro-beta-NAD(P) and 1,6-dihydro-beta-NAD(P) to form beta-NAD(P)(+). The enzyme hormone is secreted by the kidney, and circulates in blood and modulates cardiac function and systemic blood pressure. Lowers blood pressure in vivo by decreasing cardiac contractility and heart rate and preventing a compensatory increase in peripheral vascular tone, suggesting a causal link to the increased plasma catecholamine and heightened cardiovascular risk. High concentrations of catecholamines activate plasma renalase and promotes its secretion and synthesis. The chain is Renalase (RNLS) from Homo sapiens (Human).